Here is a 313-residue protein sequence, read N- to C-terminus: uncharacterized protein (313 aa).

An N-acetyltransferase domain is found at 6–152 (YDILENPEPN…YHASMEKMTG (147 aa)).

Functionally, to the C-terminal of C.elegans F21C10.9. This is an uncharacterized protein from Caenorhabditis elegans.